The chain runs to 393 residues: Cytochrome b (393 aa).

Residues 1 to 33 (MTIRNQRFSLLKQPISSTLNQHLVDYPTPSNLS) are Mitochondrial matrix-facing. Residues 34-57 (YWWGFGSLAGICLVIQIVTGVFLA) traverse the membrane as a helical segment. Residues 58–80 (MHYTPHVDLAFNSVEHIMRDVEG) are Mitochondrial intermembrane-facing. The helical transmembrane segment at 81 to 108 (GWLLRYMHANGASMFFIVVYLHIFRGLY) threads the bilayer. 2 residues coordinate heme b: histidine 88 and histidine 102. Topologically, residues 109 to 116 (YASYSSPR) are mitochondrial matrix. A helical transmembrane segment spans residues 117-141 (EFVWCLGVVIFLLMIVTAFIGYVLP). The Mitochondrial intermembrane segment spans residues 142 to 178 (WGQMSFWGATVITSLASAIPVVGDTIVTWLWGGFSVD). Residues 179 to 210 (NATLNRFFSLHYLLPFILVGASLLHLAALHQY) traverse the membrane as a helical segment. Histidine 189 and histidine 203 together coordinate heme b. Residue histidine 208 coordinates a ubiquinone. Topologically, residues 211–229 (GSNNPLGVHSEMDKIAFYP) are mitochondrial matrix. A helical membrane pass occupies residues 230-252 (YFYVKDLVGWVAFAIFFSIWIFY). The Mitochondrial intermembrane portion of the chain corresponds to 253–293 (APNVLGHPDNYIPANPMSTPPHIVPEWYFLPIYAILRSIPD). The helical transmembrane segment at 294 to 314 (KAGGVAAIALVFICLLALPFF) threads the bilayer. Residues 315–325 (KSMYVRSSSFR) are Mitochondrial matrix-facing. Residues 326-346 (PIYQGMFWLLLADCLLLGWIG) form a helical membrane-spanning segment. The Mitochondrial intermembrane segment spans residues 347-353 (CQPVEAP). A helical transmembrane segment spans residues 354–370 (FVTIGQISSLVFFLFFA). At 371–393 (ITPILGRVGRGIPNSYTDETDHT) the chain is on the mitochondrial matrix side.

The protein belongs to the cytochrome b family. Component of the ubiquinol-cytochrome c oxidoreductase (cytochrome b-c1 complex, complex III, CIII), a multisubunit enzyme composed of 10 subunits. The complex is composed of 3 respiratory subunits cytochrome b (MT-CYB), cytochrome c1 (CYC1-1 or CYC1-2) and Rieske protein (UCR1-1 or UCR1-2), 2 core protein subunits MPPalpha1 (or MPPalpha2) and MPPB, and 5 low-molecular weight protein subunits QCR7-1 (or QCR7-2), UCRQ-1 (or UCRQ-2), QCR9, UCRY and probably QCR6-1 (or QCR6-2). The complex exists as an obligatory dimer and forms supercomplexes (SCs) in the inner mitochondrial membrane with NADH-ubiquinone oxidoreductase (complex I, CI), resulting in different assemblies (supercomplexes SCI(1)III(2) and SCI(2)III(4)). The cofactor is heme b.

The protein resides in the mitochondrion inner membrane. Functionally, component of the ubiquinol-cytochrome c oxidoreductase, a multisubunit transmembrane complex that is part of the mitochondrial electron transport chain which drives oxidative phosphorylation. The respiratory chain contains 3 multisubunit complexes succinate dehydrogenase (complex II, CII), ubiquinol-cytochrome c oxidoreductase (cytochrome b-c1 complex, complex III, CIII) and cytochrome c oxidase (complex IV, CIV), that cooperate to transfer electrons derived from NADH and succinate to molecular oxygen, creating an electrochemical gradient over the inner membrane that drives transmembrane transport and the ATP synthase. The cytochrome b-c1 complex catalyzes electron transfer from ubiquinol to cytochrome c, linking this redox reaction to translocation of protons across the mitochondrial inner membrane, with protons being carried across the membrane as hydrogens on the quinol. In the process called Q cycle, 2 protons are consumed from the matrix, 4 protons are released into the intermembrane space and 2 electrons are passed to cytochrome c. Cytochrome b is a catalytic core subunit containing 2 b-type hemes BL and BH topographically segregated in the quinone reduction (Qi) and quinol oxidation (Q0) sites on opposite sides of the membrane. The chain is Cytochrome b (MT-CYB) from Arabidopsis thaliana (Mouse-ear cress).